We begin with the raw amino-acid sequence, 297 residues long: Tumor necrosis factor receptor superfamily member 27 (297 aa).

Topologically, residues 1-138 are extracellular; the sequence is MDCQENEYWD…TPTVPPQEAT (138 aa). 3 TNFR-Cys repeats span residues 2 to 41, 43 to 83, and 85 to 118; these read DCQE…DAYC, ACPP…NAVC, and DCLP…EVQC. 8 disulfide bridges follow: C3/C15, C18/C31, C21/C41, C44/C58, C61/C75, C64/C83, C86/C104, and C107/C118. An N-linked (GlcNAc...) asparagine glycan is attached at N74. The helical; Signal-anchor for type III membrane protein transmembrane segment at 139–159 threads the bilayer; it reads LVALVSSLLVVFTLAFLGLFF. Residues 160–297 lie on the Cytoplasmic side of the membrane; it reads LYCKQFFNRH…LNVPFEVPSP (138 aa). The segment covering 272-281 has biased composition (polar residues); that stretch reads ETLGGNTVES. Positions 272–297 are disordered; it reads ETLGGNTVESTGDRLELNVPFEVPSP.

As to quaternary structure, associates with TRAF1, TRAF3 and TRAF6.

It is found in the membrane. Functionally, receptor for EDA isoform A2, but not for EDA isoform A1. Mediates the activation of the NF-kappa-B and JNK pathways. Activation seems to be mediated by binding to TRAF3 and TRAF6. The protein is Tumor necrosis factor receptor superfamily member 27 (EDA2R) of Homo sapiens (Human).